A 640-amino-acid chain; its full sequence is Chitin elicitor receptor kinase 1 (640 aa).

The first 31 residues, 1–31, serve as a signal peptide directing secretion; that stretch reads MKFQMKMKSELCRTYKYWLILLVLWLSGVTQ. The Extracellular portion of the chain corresponds to 32–248; sequence RETGVLIVDA…GTVHWRSNVG (217 aa). Disulfide bonds link Cys-43-Cys-104, Cys-49-Cys-166, and Cys-102-Cys-164. LysM domains are found at residues 53 to 98, 113 to 160, and 179 to 227; these read AYYR…NIYL, FSYT…SLTI, and STYV…KAAN. Chitin is bound by residues 119-125 and 148-154; these read TNDTAEK and DLSSIYS. A helical transmembrane segment spans residues 249 to 269; sequence IIVGVVVGGIVLAVLLLFALI. At 270-640 the chain is on the cytoplasmic side; that stretch reads FGFKHFRRRK…SQPPSGNDQL (371 aa). Residues 286–308 are disordered; it reads MQQSGLLSSSSMAGSKPSRSGST. Positions 289 to 307 are enriched in low complexity; that stretch reads SGLLSSSSMAGSKPSRSGS. A Protein kinase domain is found at 330–612; sequence FSLAKKIGQG…RFAVVQLMTL (283 aa). Residues 336-344 and Lys-357 each bind ATP; that span reads IGQGGFASV. The active-site Proton acceptor is the Asp-452.

It belongs to the protein kinase superfamily. Ser/Thr protein kinase family.

Its subcellular location is the cell membrane. It catalyses the reaction L-seryl-[protein] + ATP = O-phospho-L-seryl-[protein] + ADP + H(+). The enzyme catalyses L-threonyl-[protein] + ATP = O-phospho-L-threonyl-[protein] + ADP + H(+). Lysin motif (LysM) receptor kinase required as a cell surface receptor for chitin elicitor (chitooligosaccharides) signaling leading to innate immunity in response to biotic stresses. The CERK1, MEKK1a/b, MKK1a/b/c and MPK4a/b proteins are involved in pathogen defense. The pathway induces rapid growth inhibition, cell wall depositions and accumulation of defense-related transcripts. This protein is required for response to chitin. Is able to complement the A.thaliana cerk1 mutant. This Physcomitrium patens (Spreading-leaved earth moss) protein is Chitin elicitor receptor kinase 1.